The chain runs to 310 residues: MGKRRCVPPLEPKLAAGCCGVKKPKLSGSGTHSHGNQSTTVPGSSSGPLQNHQHVDNSSGRENVSDLTLGPGNSPITRMNTASGALSPLPRPNGTANSTKNLVVTAEMCCYCFDVLYCHLYGFPQPRLPRFTNDPYPLFVTWKTGRDKRLRGCIGTFSAMNLHSGLREYTLTSALKDSRFPPLTREELPKLFCSVSLLTNFEDASDYLDWEVGVHGIRIEFINEKGIKRTATYLPEVAKEQDWDQIQTIDSLLRKGGFKAPITSEFRKSIKLTRYRSEKVTISYAEYIASRQHCFQNGTLHAPPLYNHYS.

A disordered region spans residues 26-92 (LSGSGTHSHG…SGALSPLPRP (67 aa)). 2 stretches are compositionally biased toward polar residues: residues 28–66 (GSGTHSHGNQSTTVPGSSSGPLQNHQHVDNSSGRENVSD) and 74–84 (SPITRMNTASG). Position 74 is a phosphoserine (S74). Residues 97–291 (NSTKNLVVTA…ISYAEYIASR (195 aa)) enclose the AMMECR1 domain.

This chain is AMMECR1-like protein (Ammecr1l), found in Mus musculus (Mouse).